A 220-amino-acid chain; its full sequence is MADS-box protein AGL24 (220 aa).

An MADS-box domain is found at 1-61 (MAREKIRIKK…GKLFEFSSSR (61 aa)). The region spanning 87-177 (LRLENCNLSR…RDKLETLERA (91 aa)) is the K-box domain. A compositionally biased stretch (polar residues) spans 190-200 (SVTTNVSSYDS). The segment at 190-220 (SVTTNVSSYDSGTPLEDDSDTSLKLGLPSWE) is disordered.

Interacts with IMK3/MRLK. Forms a homodimer and heterodimer with SOC1, AP1 and SVP through MADS-box domain. Interacts with the SEU-LUG corepressor complex when complexed to AP1. Interacts with AGL15 and AGL16. Phosphorylated by IMK3. Induced by vernalization. As to expression, mostly expressed in shoot apical meristems, including floral meristems. Also detected in stems, seedlings, leaves, flowers and siliques, and, to a lower extent, in roots.

The protein localises to the nucleus. It is found in the cytoplasm. Transcription activator that mediates floral transition in response to vernalization. Promotes inflorescence fate in apical meristems. Acts in a dosage-dependent manner. Probably involved in the transduction of RLK-mediated signaling (e.g. IMK3 pathway). Together with AP1 and SVP, controls the identity of the floral meristem and regulates expression of class B, C and E genes. When associated with SOC1, mediates effect of gibberellins on flowering under short-day conditions, and regulates the expression of LEAFY (LFY), which links floral induction and floral development. Confers inflorescence characteristics to floral primordia and early flowering. This Arabidopsis thaliana (Mouse-ear cress) protein is MADS-box protein AGL24 (AGL24).